Here is a 117-residue protein sequence, read N- to C-terminus: Large ribosomal subunit protein bL20 (117 aa).

This sequence belongs to the bacterial ribosomal protein bL20 family.

In terms of biological role, binds directly to 23S ribosomal RNA and is necessary for the in vitro assembly process of the 50S ribosomal subunit. It is not involved in the protein synthesizing functions of that subunit. This Oleidesulfovibrio alaskensis (strain ATCC BAA-1058 / DSM 17464 / G20) (Desulfovibrio alaskensis) protein is Large ribosomal subunit protein bL20.